The chain runs to 61 residues: Large ribosomal subunit protein bL32 (61 aa).

A compositionally biased stretch (basic residues) spans 1-16; sequence MAVPKRKTSPSKRGMR. The segment at 1–35 is disordered; sequence MAVPKRKTSPSKRGMRRSADGLKSATYVEDKNSGE.

Belongs to the bacterial ribosomal protein bL32 family.

In Agrobacterium fabrum (strain C58 / ATCC 33970) (Agrobacterium tumefaciens (strain C58)), this protein is Large ribosomal subunit protein bL32.